We begin with the raw amino-acid sequence, 406 residues long: Peptide chain release factor PrfB3, chloroplastic (406 aa).

Belongs to the prokaryotic/mitochondrial release factor family. In terms of assembly, interacts with PDE338.

It localises to the plastid. The protein localises to the chloroplast stroma. The protein resides in the chloroplast. Functionally, involved in the light- and stress-dependent regulation of stability of 3' processed petB transcripts, thus regulating cytochrome b6 accumulation, a rate-limiting step in photosynthetic electron transport. May be recruited to specifically protect petB transcripts against 3'-5' exonucleolytic attack by masking the 3' ends. Does not function as release factor. The polypeptide is Peptide chain release factor PrfB3, chloroplastic (Arabidopsis thaliana (Mouse-ear cress)).